The chain runs to 131 residues: Small ribosomal subunit protein uS8 (131 aa).

It belongs to the universal ribosomal protein uS8 family. Part of the 30S ribosomal subunit. Contacts proteins S5 and S12.

One of the primary rRNA binding proteins, it binds directly to 16S rRNA central domain where it helps coordinate assembly of the platform of the 30S subunit. This is Small ribosomal subunit protein uS8 from Chlorobium limicola (strain DSM 245 / NBRC 103803 / 6330).